Consider the following 223-residue polypeptide: UPF0441 protein YgiB (223 aa).

The span at 178 to 195 shows a compositional bias: low complexity; that stretch reads TVPKTAMAPKPATTTTVT. Residues 178–223 are disordered; the sequence is TVPKTAMAPKPATTTTVTRGGFGESVAKQSTMQRSATGTSSRSMGG. The span at 204-223 shows a compositional bias: polar residues; the sequence is AKQSTMQRSATGTSSRSMGG.

Belongs to the UPF0441 family.

In Shigella boydii serotype 18 (strain CDC 3083-94 / BS512), this protein is UPF0441 protein YgiB.